The following is a 498-amino-acid chain: tRNA-2-methylthio-N(6)-dimethylallyladenosine synthase (498 aa).

Residues 2–118 (PRYSITTFGC…LPGLLGDLAI (117 aa)) enclose the MTTase N-terminal domain. [4Fe-4S] cluster-binding residues include Cys-11, Cys-47, Cys-81, Cys-163, Cys-167, and Cys-170. The 245-residue stretch at 149 to 393 (PRAAPTAFVT…FEESEALLAA (245 aa)) folds into the Radical SAM core domain. One can recognise a TRAM domain in the interval 396–467 (SALVGTTQEV…KHSLQAELTE (72 aa)). The tract at residues 469–498 (ARAAARPRQRGGLEPRPARRSLPVVAAEGG) is disordered.

The protein belongs to the methylthiotransferase family. MiaB subfamily. In terms of assembly, monomer. [4Fe-4S] cluster is required as a cofactor.

The protein localises to the cytoplasm. It carries out the reaction N(6)-dimethylallyladenosine(37) in tRNA + (sulfur carrier)-SH + AH2 + 2 S-adenosyl-L-methionine = 2-methylsulfanyl-N(6)-dimethylallyladenosine(37) in tRNA + (sulfur carrier)-H + 5'-deoxyadenosine + L-methionine + A + S-adenosyl-L-homocysteine + 2 H(+). In terms of biological role, catalyzes the methylthiolation of N6-(dimethylallyl)adenosine (i(6)A), leading to the formation of 2-methylthio-N6-(dimethylallyl)adenosine (ms(2)i(6)A) at position 37 in tRNAs that read codons beginning with uridine. This chain is tRNA-2-methylthio-N(6)-dimethylallyladenosine synthase, found in Sorangium cellulosum (strain So ce56) (Polyangium cellulosum (strain So ce56)).